Consider the following 142-residue polypeptide: MSTFTAKNETVQRDWYLVDAEGKTLGRLATELARRLRGKHKPVYTPHVDTGDYLVVINAEKIAVTGKKLQDKMYHRFTGYIGNLKTESLAQALERHPERVIEIAVKGMLPKGPLGRQMYRKLKVYAGTEHPHAAQQPQVLDI.

Belongs to the universal ribosomal protein uL13 family. In terms of assembly, part of the 50S ribosomal subunit.

Functionally, this protein is one of the early assembly proteins of the 50S ribosomal subunit, although it is not seen to bind rRNA by itself. It is important during the early stages of 50S assembly. The polypeptide is Large ribosomal subunit protein uL13 (Stenotrophomonas maltophilia (strain K279a)).